We begin with the raw amino-acid sequence, 301 residues long: Cell division control protein 2 homolog 1 (301 aa).

Positions 5-297 (YQRLEKIGEG…AAQALEHPYF (293 aa)) constitute a Protein kinase domain. Residues 11 to 19 (IGEGSYGVV) and lysine 34 contribute to the ATP site. Serine 15 bears the Phosphoserine mark. A Phosphotyrosine modification is found at tyrosine 16. The active-site Proton acceptor is the aspartate 127. Residue threonine 160 is modified to Phosphothreonine; by CAK.

The protein belongs to the protein kinase superfamily. CMGC Ser/Thr protein kinase family. CDC2/CDKX subfamily. In terms of assembly, forms a stable but non-covalent complex with a regulatory subunit and with a cyclin.

It catalyses the reaction L-seryl-[protein] + ATP = O-phospho-L-seryl-[protein] + ADP + H(+). It carries out the reaction L-threonyl-[protein] + ATP = O-phospho-L-threonyl-[protein] + ADP + H(+). With respect to regulation, phosphorylation at Ser-15 or Tyr-16 inactivates the enzyme, while phosphorylation at Thr-160 activates it. Functionally, probably involved in the control of the cell cycle. The protein is Cell division control protein 2 homolog 1 (CRK1) of Trypanosoma congolense.